Here is a 383-residue protein sequence, read N- to C-terminus: Acetylornithine deacetylase (383 aa).

His80 contributes to the Zn(2+) binding site. Residue Asp82 is part of the active site. Zn(2+) is bound at residue Asp112. Glu144 is a catalytic residue. Zn(2+)-binding residues include Glu145, Glu169, and His355.

This sequence belongs to the peptidase M20A family. ArgE subfamily. Homodimer. Requires Zn(2+) as cofactor. The cofactor is Co(2+). It depends on glutathione as a cofactor.

The protein localises to the cytoplasm. It carries out the reaction N(2)-acetyl-L-ornithine + H2O = L-ornithine + acetate. The protein operates within amino-acid biosynthesis; L-arginine biosynthesis; L-ornithine from N(2)-acetyl-L-ornithine (linear): step 1/1. Catalyzes the hydrolysis of the amide bond of N(2)-acetylated L-amino acids. Cleaves the acetyl group from N-acetyl-L-ornithine to form L-ornithine, an intermediate in L-arginine biosynthesis pathway, and a branchpoint in the synthesis of polyamines. The chain is Acetylornithine deacetylase from Escherichia coli O139:H28 (strain E24377A / ETEC).